Reading from the N-terminus, the 653-residue chain is Exocyst complex component 7 (653 aa).

The segment at Met1–Thr384 is SEC8 and ARHQ binding. Coiled-coil stretches lie at residues Gln5–Met42 and Val63–Asp85. Ser133 is subject to Phosphoserine. Residues Phe238 to Asp272 are disordered.

This sequence belongs to the EXO70 family. In terms of assembly, the exocyst complex is composed of EXOC1, EXOC2, EXOC3, EXOC4, EXOC5, EXOC6, EXOC7 and EXOC8. Interacts with ARHQ in a GTP-dependent manner. Interacts with RAB11FIP3.

Its subcellular location is the cytoplasm. It is found in the cytosol. It localises to the cell membrane. The protein localises to the midbody. The protein resides in the midbody ring. In terms of biological role, component of the exocyst complex involved in the docking of exocytic vesicles with fusion sites on the plasma membrane. In adipocytes, plays a crucial role in targeting SLC2A4 vesicle to the plasma membrane in response to insulin, perhaps directing the vesicle to the precise site of fusion. It is required for neuron survival and plays an essential role in cortical development. The polypeptide is Exocyst complex component 7 (Exoc7) (Rattus norvegicus (Rat)).